Here is a 432-residue protein sequence, read N- to C-terminus: Adenylosuccinate synthetase (432 aa).

Residues 13–19 and 41–43 each bind GTP; these read GDEGKGK and GHT. Asp14 serves as the catalytic Proton acceptor. 2 residues coordinate Mg(2+): Asp14 and Gly41. IMP contacts are provided by residues 14 to 17, 39 to 42, Thr130, Arg144, Gln225, Thr240, and Arg304; these read DEGK and NAGH. His42 acts as the Proton donor in catalysis. 300-306 lines the substrate pocket; sequence ATTGRRR. Residues Arg306, 332–334, and 415–417 contribute to the GTP site; these read KLD and STG.

The protein belongs to the adenylosuccinate synthetase family. Homodimer. It depends on Mg(2+) as a cofactor.

The protein localises to the cytoplasm. The catalysed reaction is IMP + L-aspartate + GTP = N(6)-(1,2-dicarboxyethyl)-AMP + GDP + phosphate + 2 H(+). It participates in purine metabolism; AMP biosynthesis via de novo pathway; AMP from IMP: step 1/2. In terms of biological role, plays an important role in the de novo pathway of purine nucleotide biosynthesis. Catalyzes the first committed step in the biosynthesis of AMP from IMP. This is Adenylosuccinate synthetase from Salmonella agona (strain SL483).